The following is a 462-amino-acid chain: L-seryl-tRNA(Sec) selenium transferase (462 aa).

An N6-(pyridoxal phosphate)lysine modification is found at lysine 293.

The protein belongs to the SelA family. Pyridoxal 5'-phosphate serves as cofactor.

Its subcellular location is the cytoplasm. It catalyses the reaction L-seryl-tRNA(Sec) + selenophosphate + H(+) = L-selenocysteinyl-tRNA(Sec) + phosphate. It participates in aminoacyl-tRNA biosynthesis; selenocysteinyl-tRNA(Sec) biosynthesis; selenocysteinyl-tRNA(Sec) from L-seryl-tRNA(Sec) (bacterial route): step 1/1. Functionally, converts seryl-tRNA(Sec) to selenocysteinyl-tRNA(Sec) required for selenoprotein biosynthesis. The polypeptide is L-seryl-tRNA(Sec) selenium transferase (Clostridium botulinum (strain ATCC 19397 / Type A)).